Consider the following 467-residue polypeptide: H(+)/Cl(-) exchange transporter ClcA (467 aa).

Over Met-1–Pro-30 the chain is Cytoplasmic. The chain crosses the membrane as a helical span at residues Ile-31–Lys-67. Residues Ser-68–Leu-74 are Periplasmic-facing. Residues Pro-75–Phe-98 form a helical membrane-spanning segment. A Selectivity filter part_1 motif is present at residues Gly-104–Pro-108. Position 105 (Ser-105) interacts with chloride. The segment at residues Ile-107–Met-114 is an intramembrane region (helical). At Asp-115–Arg-121 the chain is on the cytoplasmic side. Transmembrane regions (helical) follow at residues Trp-122 to Ser-139 and Glu-146 to Phe-164. The short motif at Gly-144–Pro-148 is the Selectivity filter part_2 element. The Cytoplasmic portion of the chain corresponds to Arg-165–Ser-174. 2 consecutive intramembrane regions (helical) follow at residues Leu-175–Ala-187 and Pro-191–Val-199. The Cytoplasmic segment spans residues Glu-200–Ser-212. The helical transmembrane segment at Ile-213 to Ile-230 threads the bilayer. Residues Asn-231–Leu-250 are Periplasmic-facing. A helical transmembrane segment spans residues Trp-251–Val-279. The Cytoplasmic segment spans residues Ala-280–Asp-285. Residues Arg-286–Val-307 form a helical membrane-spanning segment. The Periplasmic portion of the chain corresponds to Pro-308–Ser-327. The next 2 membrane-spanning stretches (helical) occupy residues Val-328–Gly-347 and Gly-353–Lys-374. The short motif at Gly-353 to Pro-357 is the Selectivity filter part_3 element. 2 residues coordinate chloride: Ile-354 and Phe-355. Residues Ile-375–Pro-384 are Periplasmic-facing. Positions Gly-385–Thr-399 form an intramembrane region, helical. Residues Val-400–Ala-402 constitute an intramembrane region (note=Loop between two helices). The segment at residues Pro-403 to Thr-414 is an intramembrane region (helical). The note=Loop between two helices intramembrane region spans Asn-415 to Leu-419. Residues Ile-420–Ile-436 form a helical membrane-spanning segment. Topologically, residues Cys-437–Ser-467 are cytoplasmic. A chloride-binding site is contributed by Tyr-443.

The protein belongs to the chloride channel (TC 2.A.49) family. ClcA subfamily. As to quaternary structure, homodimer.

Its subcellular location is the cell inner membrane. It catalyses the reaction 2 chloride(in) + H(+)(out) = 2 chloride(out) + H(+)(in). Its function is as follows. Proton-coupled chloride transporter. Functions as antiport system and exchanges two chloride ions for 1 proton. Probably acts as an electrical shunt for an outwardly-directed proton pump that is linked to amino acid decarboxylation, as part of the extreme acid resistance (XAR) response. The polypeptide is H(+)/Cl(-) exchange transporter ClcA (Vibrio vulnificus (strain CMCP6)).